The following is a 371-amino-acid chain: Undecaprenyl-diphosphatase 1 (371 aa).

A run of 3 helical transmembrane segments spans residues 53-73, 100-120, and 126-146; these read PYLA…IVAF, LAWL…LLEH, and LGRP…MLLG. Residues 152–226 form a disordered region; that stretch reads RSTTRGAPGP…PEAEDVTLPE (75 aa). 3 consecutive transmembrane segments (helical) span residues 291-311, 322-342, and 351-371; these read FAFL…LPDL, QTLF…RFLA, and TPFA…FGIF.

It belongs to the UppP family.

It is found in the cell membrane. The enzyme catalyses di-trans,octa-cis-undecaprenyl diphosphate + H2O = di-trans,octa-cis-undecaprenyl phosphate + phosphate + H(+). In terms of biological role, catalyzes the dephosphorylation of undecaprenyl diphosphate (UPP). Confers resistance to bacitracin. The chain is Undecaprenyl-diphosphatase 1 from Frankia casuarinae (strain DSM 45818 / CECT 9043 / HFP020203 / CcI3).